We begin with the raw amino-acid sequence, 682 residues long: DNA-directed RNA polymerase subunit beta' (682 aa).

Positions 69, 71, 87, and 90 each coordinate Zn(2+). Mg(2+) is bound by residues Asp489, Asp491, and Asp493.

The protein belongs to the RNA polymerase beta' chain family. RpoC1 subfamily. As to quaternary structure, in plastids the minimal PEP RNA polymerase catalytic core is composed of four subunits: alpha, beta, beta', and beta''. When a (nuclear-encoded) sigma factor is associated with the core the holoenzyme is formed, which can initiate transcription. The cofactor is Mg(2+). Zn(2+) is required as a cofactor.

Its subcellular location is the plastid. It localises to the chloroplast. The enzyme catalyses RNA(n) + a ribonucleoside 5'-triphosphate = RNA(n+1) + diphosphate. Functionally, DNA-dependent RNA polymerase catalyzes the transcription of DNA into RNA using the four ribonucleoside triphosphates as substrates. The sequence is that of DNA-directed RNA polymerase subunit beta' from Vitis vinifera (Grape).